We begin with the raw amino-acid sequence, 233 residues long: Probable GTP-binding protein EngB (233 aa).

Residues 23–209 (AVPEVAFAGR…QRIVAGWLCL (187 aa)) form the EngB-type G domain. Residues 31-38 (GRSNAGKS), 58-62 (GRTQH), 82-85 (DLPG), 149-152 (TKAD), and 188-190 (FSS) contribute to the GTP site. Positions 38 and 60 each coordinate Mg(2+).

This sequence belongs to the TRAFAC class TrmE-Era-EngA-EngB-Septin-like GTPase superfamily. EngB GTPase family. Mg(2+) is required as a cofactor.

Necessary for normal cell division and for the maintenance of normal septation. The protein is Probable GTP-binding protein EngB of Ralstonia pickettii (strain 12J).